Here is a 259-residue protein sequence, read N- to C-terminus: Ribosomal RNA small subunit methyltransferase A (259 aa).

S-adenosyl-L-methionine is bound by residues Asn13, Leu15, Gly40, Glu61, Asp85, and Asn103.

The protein belongs to the class I-like SAM-binding methyltransferase superfamily. rRNA adenine N(6)-methyltransferase family. RsmA subfamily.

It localises to the cytoplasm. The enzyme catalyses adenosine(1518)/adenosine(1519) in 16S rRNA + 4 S-adenosyl-L-methionine = N(6)-dimethyladenosine(1518)/N(6)-dimethyladenosine(1519) in 16S rRNA + 4 S-adenosyl-L-homocysteine + 4 H(+). Its function is as follows. Specifically dimethylates two adjacent adenosines (A1518 and A1519) in the loop of a conserved hairpin near the 3'-end of 16S rRNA in the 30S particle. May play a critical role in biogenesis of 30S subunits. The polypeptide is Ribosomal RNA small subunit methyltransferase A (Neisseria gonorrhoeae (strain ATCC 700825 / FA 1090)).